The sequence spans 217 residues: Endo-1,4-beta-xylanase (217 aa).

The signal sequence occupies residues 1–17 (MQFLIPVVILCVSLVDS). Residues 20-217 (VLYNNEIGFN…SSGFADITVS (198 aa)) enclose the GH11 domain. Asn56 and Asn80 each carry an N-linked (GlcNAc...) asparagine glycan. Glu107 functions as the Nucleophile in the catalytic mechanism. Catalysis depends on Glu204, which acts as the Proton donor.

It belongs to the glycosyl hydrolase 11 (cellulase G) family. In terms of tissue distribution, expressed in larval carcasses and gut, and adult gut.

It localises to the secreted. It catalyses the reaction Endohydrolysis of (1-&gt;4)-beta-D-xylosidic linkages in xylans.. It participates in glycan degradation; xylan degradation. This is Endo-1,4-beta-xylanase from Phaedon cochleariae (Mustard beetle).